Consider the following 443-residue polypeptide: Proline--tRNA ligase (443 aa).

It belongs to the class-II aminoacyl-tRNA synthetase family. ProS type 2 subfamily. Homodimer.

It localises to the cytoplasm. The catalysed reaction is tRNA(Pro) + L-proline + ATP = L-prolyl-tRNA(Pro) + AMP + diphosphate. In terms of biological role, catalyzes the attachment of proline to tRNA(Pro) in a two-step reaction: proline is first activated by ATP to form Pro-AMP and then transferred to the acceptor end of tRNA(Pro). The polypeptide is Proline--tRNA ligase (Caulobacter vibrioides (strain ATCC 19089 / CIP 103742 / CB 15) (Caulobacter crescentus)).